The chain runs to 439 residues: MAIQKVFARQIYDSRGNPTVEVDLTTETGIHRAIVPSGASTGIWEALEMRDGDKTKWGGKGVLKAVGNVNNIIAPAVVKANLDVTDQKAADEFLLKLDGTENKSKLGANAILGVSMAICRAGAAQKKLPLWKYIAENFGTKGPYVLPVPSFNVLNGGSHAGGDLAFQEFMILPTGAPSFSEAMRWGAETYHTLKSIAKKRYGSSAGNVGDEGGIAPDLQTPQEALDLIVEAINKAGYEGKIKIGLDVASSEFYVDGKYDLDIKAAKPKPENKLTYQQLTDLYVELSKKYPIVSIEDPFDQDDWSAWTHMKAETDFQIVGDDLTVTNVKRLRTAIDKKCANALLLKVNQIGSVTESLNAVRMSYEAGWGVMVSHRSGETADTFISHLTVGIGAGQLKSGAPCRSERLAKYNELLRIEEELGSEGVYAGAHAGKYIKAAKF.

Position 85 is a phosphothreonine (Thr85). The substrate site is built by His159 and Glu168. Glu211 serves as the catalytic Proton donor. Asp246 is a binding site for Mg(2+). 2 positions are modified to phosphoserine: Ser249 and Ser250. At Tyr253 the chain carries Phosphotyrosine. The substrate site is built by Glu295 and Asp320. Residues Glu295 and Asp320 each coordinate Mg(2+). Catalysis depends on Lys345, which acts as the Proton acceptor. At Ser351 the chain carries Phosphoserine. Thr353 bears the Phosphothreonine mark. Phosphoserine is present on Ser355. Residues 372–375 (SHRS) and Lys396 each bind substrate. The residue at position 421 (Ser421) is a Phosphoserine.

The protein belongs to the enolase family. As to quaternary structure, homodimer. The cofactor is Mg(2+).

Its subcellular location is the cytoplasm. It carries out the reaction (2R)-2-phosphoglycerate = phosphoenolpyruvate + H2O. It functions in the pathway carbohydrate degradation; glycolysis; pyruvate from D-glyceraldehyde 3-phosphate: step 4/5. The polypeptide is Enolase 1-1 (eno101) (Schizosaccharomyces pombe (strain 972 / ATCC 24843) (Fission yeast)).